The chain runs to 736 residues: Catalase-peroxidase (736 aa).

Positions 1-30 (MGGNVMTDDKMNSVTSGANKQETGRDMSNR) are disordered. Residues 12–21 (NSVTSGANKQ) show a composition bias toward polar residues. Residues 101–224 (WHSAGTYRAG…LAAVQMGLIY (124 aa)) constitute a cross-link (tryptophyl-tyrosyl-methioninium (Trp-Tyr) (with M-250)). The active-site Proton acceptor is the His-102. The segment at residues 224-250 (YVNPEGPNGNPDPIAAAKDIREVFARM) is a cross-link (tryptophyl-tyrosyl-methioninium (Tyr-Met) (with W-101)). Heme b is bound at residue His-265. The disordered stretch occupies residues 351–373 (KGGAGAGTIPDAHDPSKRHAPSM).

This sequence belongs to the peroxidase family. Peroxidase/catalase subfamily. In terms of assembly, homodimer or homotetramer. Heme b serves as cofactor. Post-translationally, formation of the three residue Trp-Tyr-Met cross-link is important for the catalase, but not the peroxidase activity of the enzyme.

It catalyses the reaction H2O2 + AH2 = A + 2 H2O. The enzyme catalyses 2 H2O2 = O2 + 2 H2O. Bifunctional enzyme with both catalase and broad-spectrum peroxidase activity. The polypeptide is Catalase-peroxidase (Methanosarcina acetivorans (strain ATCC 35395 / DSM 2834 / JCM 12185 / C2A)).